The primary structure comprises 219 residues: MKEVAPAANLVIPKLIVGLGNPEPKYDQTRHNIGFTGIDTIANIWQVSLSENRKFKGEFGEGRRPKAEKIYLLKPLTYMNRSGEAISAVVNWYKLPPSCVLIIYDDMDLPMGRLRLRLSGSAGGHNGMKSAIAHLGTQEFPRLRIGIGKPKNITAERGEAKTISHVLGKFSPKENKLMTQVLELVVDAVELSLKQGIEKAMSLYNNRTITENPVSKPPS.

Tyr-26 serves as a coordination point for tRNA. His-31 acts as the Proton acceptor in catalysis. The tRNA site is built by Tyr-78, Asn-80, and Asn-126.

Belongs to the PTH family. In terms of assembly, monomer.

Its subcellular location is the cytoplasm. The catalysed reaction is an N-acyl-L-alpha-aminoacyl-tRNA + H2O = an N-acyl-L-amino acid + a tRNA + H(+). Hydrolyzes ribosome-free peptidyl-tRNAs (with 1 or more amino acids incorporated), which drop off the ribosome during protein synthesis, or as a result of ribosome stalling. In terms of biological role, catalyzes the release of premature peptidyl moieties from peptidyl-tRNA molecules trapped in stalled 50S ribosomal subunits, and thus maintains levels of free tRNAs and 50S ribosomes. The protein is Peptidyl-tRNA hydrolase of Trichodesmium erythraeum (strain IMS101).